The primary structure comprises 443 residues: Dihydroorotate dehydrogenase (quinone), mitochondrial (443 aa).

The N-terminal 21 residues, 1-21 (MYQRSLFRGVAQGLKRSSVRF), are a transit peptide targeting the mitochondrion. The helical transmembrane segment at 38–54 (WKLLSVIGSFTAGVAIY) threads the bilayer. FMN-binding positions include 122 to 126 (AGFDK) and serine 146. Residue lysine 126 coordinates substrate. Serine 168 carries the post-translational modification Phosphoserine. 171–175 (NRYGF) contributes to the substrate binding site. The FMN site is built by asparagine 234 and asparagine 264. Position 264-269 (264-269 (NVSSPN)) interacts with substrate. Serine 267 (nucleophile) is an active-site residue. An FMN-binding site is contributed by lysine 306. Position 335–336 (335–336 (NT)) interacts with substrate. FMN is bound by residues glycine 358, glycine 387, and 408–409 (YT).

The protein belongs to the dihydroorotate dehydrogenase family. Type 2 subfamily. FMN serves as cofactor.

The protein resides in the mitochondrion inner membrane. The enzyme catalyses (S)-dihydroorotate + a quinone = orotate + a quinol. Its pathway is pyrimidine metabolism; UMP biosynthesis via de novo pathway; orotate from (S)-dihydroorotate (quinone route): step 1/1. In terms of biological role, in the de novo pyrimidine biosynthesis pathway, catalyzes the stereospecific oxidation of (S)-dihydroorotate to orotate with reduction of flavin and the transfer of electrons to ubiquinone, which is part of the respiratory chain. Does not use fumarate and NAD as electron acceptors. The polypeptide is Dihydroorotate dehydrogenase (quinone), mitochondrial (ura3) (Schizosaccharomyces pombe (strain 972 / ATCC 24843) (Fission yeast)).